Consider the following 1250-residue polypeptide: Myosin-1 (1250 aa).

Residues 1–43 (MGHSRRPAGGEKKSRGFGRSKAAADVGDGRQTGGKPQVKKATF) form a disordered region. Positions 51–730 (IGVSDLTLLS…TLFALEAMRD (680 aa)) constitute a Myosin motor domain. Residue 144 to 151 (GESGAGKT) coordinates ATP. Ser-372 carries the phosphoserine modification. Positions 419–501 (SIGILDIYGF…PGVFAALNDA (83 aa)) are actin-binding. IQ domains follow at residues 734-754 (HNMAIRIQRAWRNYLRYRTEC) and 755-780 (AIRIQRFWRRTTGGLEFIKLRDQGHQ). Positions 788 to 978 (RRRMSLLGSR…TIHTGPGEPA (191 aa)) constitute a TH1 domain. 2 disordered regions span residues 962-1079 (DDSY…PKKP) and 1126-1250 (WTPE…DDDW). Residues 1021 to 1035 (AAQPLPRATPQPAAP) show a composition bias toward pro residues. Over residues 1036–1051 (QPAARAVPQPVAAVAA) the composition is skewed to low complexity. Composition is skewed to pro residues over residues 1064-1077 (APPPPPPAAAPAPK) and 1139-1151 (TPKPAPPPPPPAA). One can recognise an SH3 domain in the interval 1076–1137 (PKKPTAKVLY…PEAYLEEQVA (62 aa)). A compositionally biased stretch (low complexity) spans 1152–1170 (PRSTPAPATNGAAAAAKAK). Positions 1201–1222 (VSMNSHDSSGGSGRGTPNSMSN) are enriched in polar residues. A compositionally biased stretch (low complexity) spans 1223 to 1232 (ASLAGGLAEA).

The protein belongs to the TRAFAC class myosin-kinesin ATPase superfamily. Myosin family. Post-translationally, phosphorylation of the TEDS site (Ser-372) is required for the polarization of the actin cytoskeleton. Phosphorylation probably activates the myosin-I ATPase activity.

The protein localises to the cytoplasm. It localises to the cytoskeleton. Its subcellular location is the actin patch. Functionally, type-I myosin implicated in the organization of the actin cytoskeleton. Required for proper actin cytoskeleton polarization. At the cell cortex, assembles in patch-like structures together with proteins from the actin-polymerizing machinery and promotes actin assembly. Functions as actin nucleation-promoting factor (NPF) for the Arp2/3 complex. Plays an important role in polarized growth, spore germination, hyphal morphogenesis, and septal wall formation. The sequence is that of Myosin-1 (myoA) from Neosartorya fischeri (strain ATCC 1020 / DSM 3700 / CBS 544.65 / FGSC A1164 / JCM 1740 / NRRL 181 / WB 181) (Aspergillus fischerianus).